The chain runs to 344 residues: tRNA N6-adenosine threonylcarbamoyltransferase (344 aa).

Fe cation-binding residues include His-118 and His-122. Substrate contacts are provided by residues 141–145 (TASGG), Asp-174, Gly-187, and Asn-284. Asp-312 contributes to the Fe cation binding site.

The protein belongs to the KAE1 / TsaD family. It depends on Fe(2+) as a cofactor.

It localises to the cytoplasm. The enzyme catalyses L-threonylcarbamoyladenylate + adenosine(37) in tRNA = N(6)-L-threonylcarbamoyladenosine(37) in tRNA + AMP + H(+). Functionally, required for the formation of a threonylcarbamoyl group on adenosine at position 37 (t(6)A37) in tRNAs that read codons beginning with adenine. Is involved in the transfer of the threonylcarbamoyl moiety of threonylcarbamoyl-AMP (TC-AMP) to the N6 group of A37, together with TsaE and TsaB. TsaD likely plays a direct catalytic role in this reaction. The protein is tRNA N6-adenosine threonylcarbamoyltransferase of Desulfotalea psychrophila (strain LSv54 / DSM 12343).